A 170-amino-acid chain; its full sequence is Small ribosomal subunit protein uS13m (170 aa).

Positions 130 to 170 (LKKKPTNRKERRIFNKIKKLQDKHNKQQQKNKKSKKWKTKK) are disordered. Composition is skewed to basic residues over residues 132-147 (KKPT…NKIK) and 155-170 (KQQQ…KTKK).

It belongs to the universal ribosomal protein uS13 family. Part of the small ribosomal subunit.

The protein localises to the mitochondrion. In terms of biological role, located at the top of the head of the small subunit, it contacts several helices of the small subunit rRNA. The polypeptide is Small ribosomal subunit protein uS13m (mrps13) (Dictyostelium citrinum (Slime mold)).